The chain runs to 257 residues: tRNA (cytidine/uridine/adenosine-2'-O-)-methyltransferase TrmJ (257 aa).

S-adenosyl-L-methionine contacts are provided by residues 79–82 (TSAR), 115–117 (GRE), Ile-135, and 142–144 (GSL).

The protein belongs to the class IV-like SAM-binding methyltransferase superfamily. RNA methyltransferase TrmH family. As to quaternary structure, homodimer.

It is found in the cytoplasm. It catalyses the reaction cytidine(32) in tRNA + S-adenosyl-L-methionine = 2'-O-methylcytidine(32) in tRNA + S-adenosyl-L-homocysteine + H(+). It carries out the reaction uridine(32) in tRNA + S-adenosyl-L-methionine = 2'-O-methyluridine(32) in tRNA + S-adenosyl-L-homocysteine + H(+). The catalysed reaction is adenosine(32) in tRNA + S-adenosyl-L-methionine = 2'-O-methyladenosine(32) in tRNA + S-adenosyl-L-homocysteine + H(+). Functionally, catalyzes the formation of 2'O-methylated cytidine (Cm32), 2'O-methylated uridine (Um32) or 2'O-methylated adenosine (Am32) at position 32 in tRNA. Confers resistance to oxidative stress. The sequence is that of tRNA (cytidine/uridine/adenosine-2'-O-)-methyltransferase TrmJ from Pseudomonas aeruginosa (strain UCBPP-PA14).